A 196-amino-acid polypeptide reads, in one-letter code: Fe/S biogenesis protein NfuA (196 aa).

The [4Fe-4S] cluster site is built by C154 and C157.

Belongs to the NfuA family. As to quaternary structure, homodimer. [4Fe-4S] cluster serves as cofactor.

Involved in iron-sulfur cluster biogenesis. Binds a 4Fe-4S cluster, can transfer this cluster to apoproteins, and thereby intervenes in the maturation of Fe/S proteins. Could also act as a scaffold/chaperone for damaged Fe/S proteins. The chain is Fe/S biogenesis protein NfuA from Blochmanniella pennsylvanica (strain BPEN).